A 371-amino-acid chain; its full sequence is Queuine tRNA-ribosyltransferase (371 aa).

Asp-90 (proton acceptor) is an active-site residue. Substrate-binding positions include 90-94 (DSGGF), Asp-144, Gln-188, and Gly-215. An RNA binding region spans residues 246–252 (GVGTPED). Asp-265 (nucleophile) is an active-site residue. Residues 270 to 274 (TRNAR) are RNA binding; important for wobble base 34 recognition. Cys-303, Cys-305, Cys-308, and His-334 together coordinate Zn(2+).

The protein belongs to the queuine tRNA-ribosyltransferase family. In terms of assembly, homodimer. Within each dimer, one monomer is responsible for RNA recognition and catalysis, while the other monomer binds to the replacement base PreQ1. Requires Zn(2+) as cofactor.

The enzyme catalyses 7-aminomethyl-7-carbaguanine + guanosine(34) in tRNA = 7-aminomethyl-7-carbaguanosine(34) in tRNA + guanine. It participates in tRNA modification; tRNA-queuosine biosynthesis. In terms of biological role, catalyzes the base-exchange of a guanine (G) residue with the queuine precursor 7-aminomethyl-7-deazaguanine (PreQ1) at position 34 (anticodon wobble position) in tRNAs with GU(N) anticodons (tRNA-Asp, -Asn, -His and -Tyr). Catalysis occurs through a double-displacement mechanism. The nucleophile active site attacks the C1' of nucleotide 34 to detach the guanine base from the RNA, forming a covalent enzyme-RNA intermediate. The proton acceptor active site deprotonates the incoming PreQ1, allowing a nucleophilic attack on the C1' of the ribose to form the product. After dissociation, two additional enzymatic reactions on the tRNA convert PreQ1 to queuine (Q), resulting in the hypermodified nucleoside queuosine (7-(((4,5-cis-dihydroxy-2-cyclopenten-1-yl)amino)methyl)-7-deazaguanosine). This chain is Queuine tRNA-ribosyltransferase, found in Neisseria meningitidis serogroup A / serotype 4A (strain DSM 15465 / Z2491).